Consider the following 155-residue polypeptide: V-type proton ATPase 16 kDa proteolipid subunit c (155 aa).

The Lumenal segment spans residues 1–10; that stretch reads MADIKNNPEY. The chain crosses the membrane as a helical span at residues 11–33; sequence SSFFGVMGASSAMVFSAMGAAYG. At 34–55 the chain is on the cytoplasmic side; the sequence is TAKSGTGIAAMSVMRPELIMKS. Residues 56 to 76 form a helical membrane-spanning segment; sequence IIPVVMAGIIAIYGLVVAVLI. At 77–92 the chain is on the lumenal side; the sequence is ANSLTDGITLYRSFLQ. A helical transmembrane segment spans residues 93–114; sequence LGAGLSVGLSGLAAGFAIGIVG. The Cytoplasmic portion of the chain corresponds to 115–131; the sequence is DAGVRGTAQQPRLFVGM. Residues 132–152 traverse the membrane as a helical segment; sequence ILILIFAEVLGLYGLIVALIL. Over 153–155 the chain is Lumenal; the sequence is STK.

It belongs to the V-ATPase proteolipid subunit family. As to quaternary structure, V-ATPase is a heteromultimeric enzyme made up of two complexes: the ATP-hydrolytic V1 complex and the proton translocation V0 complex. The V1 complex consists of three catalytic AB heterodimers that form a heterohexamer, three peripheral stalks each consisting of EG heterodimers, one central rotor including subunits D and F, and the regulatory subunits C and H. The proton translocation complex V0 consists of the proton transport subunit a, a ring of proteolipid subunits c9c'', rotary subunit d, subunits e and f, and the accessory subunits ATP6AP1/Ac45 and ATP6AP2/PRR. Interacts with the V0 complex V-ATPase subunit a4 ATP6V0A4. Interacts with LASS2. Interacts with RNF182; this interaction leads to ubiquitination and degradation via the proteasome pathway. Ubiquitinated by RNF182, leading to its degradation via the ubiquitin-proteasome pathway.

The protein resides in the cytoplasmic vesicle. The protein localises to the clathrin-coated vesicle membrane. It localises to the secretory vesicle. Its subcellular location is the synaptic vesicle membrane. Its function is as follows. Proton-conducting pore forming subunit of the V0 complex of vacuolar(H+)-ATPase (V-ATPase), a multisubunit enzyme composed of a peripheral complex (V1) that hydrolyzes ATP and a membrane integral complex (V0) that translocates protons. V-ATPase is responsible for acidifying and maintaining the pH of intracellular compartments and in some cell types, is targeted to the plasma membrane, where it is responsible for acidifying the extracellular environment. This Mus musculus (Mouse) protein is V-type proton ATPase 16 kDa proteolipid subunit c (Atp6v0c).